We begin with the raw amino-acid sequence, 42 residues long: Tachystatin-B1 (42 aa).

3 cysteine pairs are disulfide-bonded: cysteine 4–cysteine 20, cysteine 11–cysteine 25, and cysteine 19–cysteine 37.

In terms of tissue distribution, granular hemocytes, small secretory granules.

It localises to the secreted. Exhibits stronger antimicrobial activity against the Gram-positive bacteria (S.aureus (IC(50) is 7.4 ug/ml)) and fungi (C.albicans (IC(50) is 3.0 ug/ml) and P.pastoris (IC(50) is 0.1 ug/ml)) than Gram-negative bacteria (E.coli no inhibition at 100 ug/ml). Binds to chitin (4.3 uM are required to obtain 50% of binding). Does not cause hemolysis on sheep erythrocytes. Has no blocking activity on the P-type calcium channel. The sequence is that of Tachystatin-B1 from Tachypleus tridentatus (Japanese horseshoe crab).